Here is a 329-residue protein sequence, read N- to C-terminus: Glycerol-3-phosphate dehydrogenase [NAD(P)+] (329 aa).

4 residues coordinate NADPH: Ser-10, Trp-11, Arg-31, and Lys-105. Lys-105, Gly-134, and Ser-136 together coordinate sn-glycerol 3-phosphate. Position 138 (Ala-138) interacts with NADPH. Residues Lys-189, Asp-242, Ser-252, Arg-253, and Asn-254 each coordinate sn-glycerol 3-phosphate. Residue Lys-189 is the Proton acceptor of the active site. Arg-253 provides a ligand contact to NADPH. NADPH contacts are provided by Val-277 and Glu-279.

It belongs to the NAD-dependent glycerol-3-phosphate dehydrogenase family.

The protein resides in the cytoplasm. It carries out the reaction sn-glycerol 3-phosphate + NAD(+) = dihydroxyacetone phosphate + NADH + H(+). The catalysed reaction is sn-glycerol 3-phosphate + NADP(+) = dihydroxyacetone phosphate + NADPH + H(+). It participates in membrane lipid metabolism; glycerophospholipid metabolism. Functionally, catalyzes the reduction of the glycolytic intermediate dihydroxyacetone phosphate (DHAP) to sn-glycerol 3-phosphate (G3P), the key precursor for phospholipid synthesis. The protein is Glycerol-3-phosphate dehydrogenase [NAD(P)+] of Neisseria meningitidis serogroup A / serotype 4A (strain DSM 15465 / Z2491).